Reading from the N-terminus, the 373-residue chain is Forkhead box protein F1 (373 aa).

A disordered region spans residues 1–51 (MTAEIQQPPSQPPAQSSPMSAATDKHGGQPSVMESANCATKTKKTNAGIRR). Residues 13-22 (PAQSSPMSAA) show a composition bias toward low complexity. Positions 54-148 (KPPYSYIALI…EEGSFRRRPR (95 aa)) form a DNA-binding region, fork-head. Disordered regions lie at residues 236 to 255 (GSSG…LGGG) and 283 to 306 (QPLS…SLDQ). The segment covering 286 to 306 (SPCNSAANPLSSSLSSHSLDQ) has biased composition (low complexity).

It is found in the nucleus. In terms of biological role, probable transcription factor. Required for smooth muscle (visceral mesoderm) differentiation during gut development. Also required for normal proliferation of the lateral plate mesoderm. Acts as a downstream mediator of bmp4-signaling. This Xenopus tropicalis (Western clawed frog) protein is Forkhead box protein F1.